The primary structure comprises 1025 residues: MSAAKENPCRKFQANIFNKSKCQNCFKPRESHLLNDEDLTQAKPIYGGWLLLAPDGTDFDNPVHRSRKWQRRFFILYEHGLLRYALDEMPTTLPQGTINMNQCTDVVDGEGRTGQKFSLCILTPEKEHFIRAETKEIVSGWLEMLMVYPRTNKQNQKKKRKVEPPTPQEPGPAKVAVTSSSSSSSSSSSIPSAEKVPTTKSTLWQEEMRTKDQPDGSSLSPAQSPSQSQPPAASSLREPGLESKEEESAMSSDRMDCGRKVRVESGYFSLEKTKQDLKAEEQQLPPPLSPPSPSTPNHRRSQVIEKFEALDIEKAEHMETNAVGPSPSSDTRQGRSEKRAFPRKRDFTNEAPPAPLPDASASPLSPHRRAKSLDRRSTEPSVTPDLLNFKKGWLTKQYEDGQWKKHWFVLADQSLRYYRDSVAEEAADLDGEIDLSACYDVTEYPVQRNYGFQIHTKEGEFTLSAMTSGIRRNWIQTIMKHVHPTTAPDVTSSLPEEKNKSSCSFETCPRPTEKQEAELGEPDPEQKRSRARERRREGRSKTFDWAEFRPIQQALAQERVGGVGPADTHEPLRPEAEPGELERERARRREERRKRFGMLDATDGPGTEDAALRMEVDRSPGLPMSDLKTHNVHVEIEQRWHQVETTPLREEKQVPIAPVHLSSEDGGDRLSTHELTSLLEKELEQSQKEASDLLEQNRLLQDQLRVALGREQSAREGYVLQATCERGFAAMEETHQKKIEDLQRQHQRELEKLREEKDRLLAEETAATISAIEAMKNAHREEMERELEKSQRSQISSVNSDVEALRRQYLEELQSVQRELEVLSEQYSQKCLENAHLAQALEAERQALRQCQRENQELNAHNQELNNRLAAEITRLRTLLTGDGGGEATGSPLAQGKDAYELEVLLRVKESEIQYLKQEISSLKDELQTALRDKKYASDKYKDIYTELSIAKAKADCDISRLKEQLKAATEALGEKSPDSATVSGYDIMKSKSNPDFLKKDRSCVTRQLRNIRSKSVIEQVSWDT.

The segment at 2-383 (SAAKENPCRK…DRRSTEPSVT (382 aa)) is interaction with F-actin. The 108-residue stretch at 43-150 (KPIYGGWLLL…WLEMLMVYPR (108 aa)) folds into the PH 1 domain. 2 disordered regions span residues 152–302 (NKQN…RRSQ) and 317–383 (HMET…PSVT). The segment covering 179–189 (SSSSSSSSSSS) has biased composition (low complexity). Residues Ser192, Ser217, Ser218, Ser220, Ser224, and Ser226 each carry the phosphoserine modification. Positions 217–236 (SSLSPAQSPSQSQPPAASSL) are enriched in low complexity. Residues 239–263 (PGLESKEEESAMSSDRMDCGRKVRV) are compositionally biased toward basic and acidic residues. Residues Ser265 and Ser269 each carry the phosphoserine modification. Residues 271–281 (EKTKQDLKAEE) are compositionally biased toward basic and acidic residues. Positions 284-294 (LPPPLSPPSPS) are enriched in pro residues. Ser289 and Ser292 each carry phosphoserine. Residue Thr295 is modified to Phosphothreonine. The residue at position 326 (Ser326) is a Phosphoserine. Basic and acidic residues predominate over residues 332-348 (RQGRSEKRAFPRKRDFT). Thr348 carries the post-translational modification Phosphothreonine. Ser362 and Ser365 each carry phosphoserine. Residues 387 to 483 (LNFKKGWLTK…WIQTIMKHVH (97 aa)) enclose the PH 2 domain. 2 disordered regions span residues 485-545 (TTAP…TFDW) and 560-591 (VGGVGPADTHEPLRPEAEPGELERERARRREE). Ser493 carries the phosphoserine modification. Composition is skewed to basic and acidic residues over residues 524 to 545 (PEQKRSRARERRREGRSKTFDW) and 567 to 589 (DTHEPLRPEAEPGELERERARRR). Residues 546–824 (AEFRPIQQAL…SVQRELEVLS (279 aa)) are interaction with RHOA. Ser619 carries the post-translational modification Phosphoserine. Phosphothreonine is present on Thr646. A phosphoserine mark is found at Ser663 and Ser800. A coiled-coil region spans residues 673–977 (HELTSLLEKE…AATEALGEKS (305 aa)). Positions 824–879 (SEQYSQKCLENAHLAQALEAERQALRQCQRENQELNAHNQELNNRLAAEITRLRTL) are interaction with PPP1R12A. Phosphoserine is present on residues Ser891, Ser977, Ser993, Ser1014, and Ser1016.

In terms of assembly, binds F-actin through its N-terminus. Interacts with MYZAP. Binds RHOA, PPP1R12A/MBS and PPP1R12C/MBS85 through adjacent coiled coil domains.

It localises to the cytoplasm. The protein localises to the cytoskeleton. Targets myosin phosphatase to the actin cytoskeleton. Required for the regulation of the actin cytoskeleton by RhoA and ROCK1. Depletion leads to an increased number of stress fibers in smooth muscle cells through stabilization of actin fibers by phosphorylated myosin. Overexpression of MRIP as well as its F-actin-binding region leads to disassembly of stress fibers in neuronal cells. The chain is Myosin phosphatase Rho-interacting protein (MPRIP) from Homo sapiens (Human).